A 214-amino-acid polypeptide reads, in one-letter code: U3 small nucleolar RNA-associated protein 16 (214 aa).

Basic and acidic residues predominate over residues 1 to 10 (MSNGHVKFDA). The segment at 1 to 106 (MSNGHVKFDA…KSVNETEVTD (106 aa)) is disordered. At Ser16 the chain carries Phosphoserine. The span at 22-41 (DRQDDVLVISKKDKEVHSSS) shows a compositional bias: basic and acidic residues. The segment covering 42-52 (DEESDDDDAPQ) has biased composition (acidic residues). A phosphoserine mark is found at Ser45, Ser65, and Ser144. Basic and acidic residues predominate over residues 54–75 (EGLHSGKSEVESQITQREEAIR). Residues 182 to 214 (STTQDSKTLPPKKESSIIRSKDRWLNRKALNKG) form a disordered region. Residues 192 to 206 (PKKESSIIRSKDRWL) are compositionally biased toward basic and acidic residues.

It belongs to the UTP16 family. In terms of assembly, part of the small subunit (SSU) processome composed of at least 40 protein subunits and the RNA chaperone small nucleolar RNA (snoRNA) U3. Interacts with snoRNA U3. Interacts with MPP10.

It localises to the nucleus. The protein localises to the nucleolus. Functions as part of the small subunit (SSU) processome, first precursor of the small eukaryotic ribosomal subunit that coordinates the first two steps of ribosome biogenesis in transcription of the primary transcript pre-RNA and pre-18S processing. During the assembly of the SSU processome in the nucleolus, many ribosome biogenesis factors, an RNA chaperone and ribosomal proteins associate with the nascent pre-rRNA and work in concert to generate RNA folding, modifications, rearrangements and cleavage as well as targeted degradation of pre-ribosomal RNA by the RNA exosome. Has a role in bud site selection maybe via the regulation of expression of bipolar budding components. The protein is U3 small nucleolar RNA-associated protein 16 (BUD21) of Saccharomyces cerevisiae (strain ATCC 204508 / S288c) (Baker's yeast).